Here is a 366-residue protein sequence, read N- to C-terminus: Leucine dehydrogenase (366 aa).

Residue Lys82 is part of the active site. Residue 182 to 188 (GVGNVAY) participates in NAD(+) binding.

This sequence belongs to the Glu/Leu/Phe/Val dehydrogenases family.

It catalyses the reaction L-leucine + NAD(+) + H2O = 4-methyl-2-oxopentanoate + NH4(+) + NADH + H(+). Its pathway is amino-acid degradation; L-leucine degradation; 4-methyl-2-oxopentanoate from L-leucine (dehydrogenase route): step 1/1. In terms of biological role, catalyzes the reversible deamination of L-leucine to 4-methyl-2-oxopentanoate. The sequence is that of Leucine dehydrogenase (ldh) from Bacillus cereus.